Here is a 711-residue protein sequence, read N- to C-terminus: Double-stranded RNA-specific editase 1 (711 aa).

The disordered stretch occupies residues 1–79 (MDIEDEENMS…RRKTPGPVLP (79 aa)). A compositionally biased stretch (basic residues) spans 63 to 73 (SKYRLKKRRKT). Residues 78–144 (LPKNALMQLN…AEKALRSFVQ (67 aa)) enclose the DRBM 1 domain. Interaction with substrate RNA regions lie at residues 83 to 88 (LMQLNE) and 104 to 105 (VH). Ser149 is subject to Phosphoserine. The tract at residues 176–220 (LFNGFETPDKSEPPFYVGSNGDDSFSSSGDVSLSASPVPASLTQP) is disordered. Residues 192-213 (VGSNGDDSFSSSGDVSLSASPV) show a composition bias toward low complexity. Positions 231 to 298 (PSGKNPVMIL…AQSALATVFN (68 aa)) constitute a DRBM 2 domain. 2 interaction with substrate RNA regions span residues 237–242 (VMILNE) and His259. One can recognise an A to I editase domain in the interval 370–707 (SVSTGTKCIN…VEKPTEQDQF (338 aa)). His394 contributes to the Zn(2+) binding site. Catalysis depends on Glu396, which acts as the Proton donor. 1D-myo-inositol hexakisphosphate contacts are provided by Arg400 and Arg401. Zn(2+) is bound by residues Cys451 and Cys526. 1D-myo-inositol hexakisphosphate is bound by residues Lys529, Arg532, Lys639, Lys672, Lys682, and Lys700.

In terms of assembly, homodimer. Homodimerization is essential for its catalytic activity. Can form heterodimers with isoform 5 of ADAR/ADAR1. It depends on 1D-myo-inositol hexakisphosphate as a cofactor. As to expression, brain and peripheral tissues.

It localises to the nucleus. The protein localises to the nucleolus. It catalyses the reaction adenosine in double-stranded RNA + H2O + H(+) = inosine in double-stranded RNA + NH4(+). Catalyzes the hydrolytic deamination of adenosine to inosine in double-stranded RNA (dsRNA) referred to as A-to-I RNA editing. This may affect gene expression and function in a number of ways that include mRNA translation by changing codons and hence the amino acid sequence of proteins; pre-mRNA splicing by altering splice site recognition sequences; RNA stability by changing sequences involved in nuclease recognition; genetic stability in the case of RNA virus genomes by changing sequences during viral RNA replication; and RNA structure-dependent activities such as microRNA production or targeting or protein-RNA interactions. Can edit both viral and cellular RNAs and can edit RNAs at multiple sites (hyper-editing) or at specific sites (site-specific editing). Its cellular RNA substrates include: bladder cancer-associated protein (BLCAP), neurotransmitter receptors for glutamate (GRIA2 and GRIK2) and serotonin (HTR2C), GABA receptor (GABRA3) and potassium voltage-gated channel (KCNA1). Site-specific RNA editing of transcripts encoding these proteins results in amino acid substitutions which consequently alter their functional activities. Edits GRIA2 at both the Q/R and R/G sites efficiently but converts the adenosine in hotspot1 much less efficiently. Can inhibit cell proliferation and migration and can stimulate exocytosis. The polypeptide is Double-stranded RNA-specific editase 1 (Adarb1) (Rattus norvegicus (Rat)).